Reading from the N-terminus, the 237-residue chain is Uridylate kinase (237 aa).

An ATP-binding site is contributed by 11 to 14 (KLSG). Glycine 53 is a UMP binding site. Residues glycine 54 and arginine 58 each contribute to the ATP site. UMP is bound by residues aspartate 73 and 134-141 (TGNPFFTT). 3 residues coordinate ATP: threonine 161, tyrosine 167, and aspartate 170.

Belongs to the UMP kinase family. In terms of assembly, homohexamer.

The protein localises to the cytoplasm. It catalyses the reaction UMP + ATP = UDP + ADP. Its pathway is pyrimidine metabolism; CTP biosynthesis via de novo pathway; UDP from UMP (UMPK route): step 1/1. Its activity is regulated as follows. Inhibited by UTP. In terms of biological role, catalyzes the reversible phosphorylation of UMP to UDP. The chain is Uridylate kinase from Burkholderia lata (strain ATCC 17760 / DSM 23089 / LMG 22485 / NCIMB 9086 / R18194 / 383).